A 207-amino-acid chain; its full sequence is Protein GrpE (207 aa).

Residues 1-11 (MTETDGQKDNN) are compositionally biased toward basic and acidic residues. Residues 1–40 (MTETDGQKDNNQDTAQAAADPVVSKPYIMPDDPEEGSNEA) form a disordered region.

This sequence belongs to the GrpE family. As to quaternary structure, homodimer.

Its subcellular location is the cytoplasm. In terms of biological role, participates actively in the response to hyperosmotic and heat shock by preventing the aggregation of stress-denatured proteins, in association with DnaK and GrpE. It is the nucleotide exchange factor for DnaK and may function as a thermosensor. Unfolded proteins bind initially to DnaJ; upon interaction with the DnaJ-bound protein, DnaK hydrolyzes its bound ATP, resulting in the formation of a stable complex. GrpE releases ADP from DnaK; ATP binding to DnaK triggers the release of the substrate protein, thus completing the reaction cycle. Several rounds of ATP-dependent interactions between DnaJ, DnaK and GrpE are required for fully efficient folding. This Rhodopseudomonas palustris (strain ATCC BAA-98 / CGA009) protein is Protein GrpE.